We begin with the raw amino-acid sequence, 382 residues long: MKITHITTYRLPPRWMFLKIETDEGVVGWGEPVIEGRARTVEAAVHEFADYLIGKDPARINDLWQVMYRAGFYRGGPIMMSAIAGIDQALWDIKGKVLNAPVWQLMGGLVRDKIKAYSWVGGDRPADVIDGIEKLRGIGFDTFKLNGCEEMGVIDNSRAVDAAVNTVAQIREAFGSEIEFGLDFHGRVSAPMAKVLIKELEPYRPLFIEEPVLAEQAEYYPRLAAQTHIPIAAGERMFSRFEFKRVLDAGGLGILQPDLSHAGGITECYKIAGMAEAYDVALAPHCPLGPIALAACLHIDFVSRNAVFQEQSMGIHYNKGAELLDFVKNKEDFSMDGGFFKPLTKPGLGVDIDEARVIELSKSAPDWSNPLWRHADGSVAEW.

Asp-183 provides a ligand contact to Mg(2+). His-185 (proton donor) is an active-site residue. Residues Glu-209 and Glu-235 each coordinate Mg(2+). The active-site Proton acceptor is the His-285.

This sequence belongs to the mandelate racemase/muconate lactonizing enzyme family. GalD subfamily. Mg(2+) is required as a cofactor.

The catalysed reaction is D-galactonate = 2-dehydro-3-deoxy-D-galactonate + H2O. The protein operates within carbohydrate acid metabolism; D-galactonate degradation; D-glyceraldehyde 3-phosphate and pyruvate from D-galactonate: step 1/3. Functionally, catalyzes the dehydration of D-galactonate to 2-keto-3-deoxy-D-galactonate. In Salmonella paratyphi A (strain AKU_12601), this protein is D-galactonate dehydratase.